Here is a 246-residue protein sequence, read N- to C-terminus: NAD(P)H-hydrate epimerase (246 aa).

The region spanning 12–234 is the YjeF N-terminal domain; that stretch reads AAEIDKELMG…DFANKFGFEP (223 aa). 69 to 73 contributes to the (6S)-NADPHX binding site; the sequence is NNGGD. Residues Asn70 and Asp138 each coordinate K(+). (6S)-NADPHX is bound by residues 142-148 and Asp173; that span reads GFSFKPP. A K(+)-binding site is contributed by Thr176.

The protein belongs to the NnrE/AIBP family. K(+) serves as cofactor.

The protein localises to the cytoplasm. It localises to the mitochondrion. The enzyme catalyses (6R)-NADHX = (6S)-NADHX. It catalyses the reaction (6R)-NADPHX = (6S)-NADPHX. In terms of biological role, catalyzes the epimerization of the S- and R-forms of NAD(P)HX, a damaged form of NAD(P)H that is a result of enzymatic or heat-dependent hydration. This is a prerequisite for the S-specific NAD(P)H-hydrate dehydratase to allow the repair of both epimers of NAD(P)HX. The protein is NAD(P)H-hydrate epimerase of Saccharomyces cerevisiae (strain ATCC 204508 / S288c) (Baker's yeast).